The chain runs to 380 residues: Ribosomal RNA large subunit methyltransferase G (380 aa).

The protein belongs to the methyltransferase superfamily. RlmG family.

Its subcellular location is the cytoplasm. It catalyses the reaction guanosine(1835) in 23S rRNA + S-adenosyl-L-methionine = N(2)-methylguanosine(1835) in 23S rRNA + S-adenosyl-L-homocysteine + H(+). Its function is as follows. Specifically methylates the guanine in position 1835 (m2G1835) of 23S rRNA. The sequence is that of Ribosomal RNA large subunit methyltransferase G from Aeromonas hydrophila subsp. hydrophila (strain ATCC 7966 / DSM 30187 / BCRC 13018 / CCUG 14551 / JCM 1027 / KCTC 2358 / NCIMB 9240 / NCTC 8049).